Consider the following 144-residue polypeptide: HTH-type transcriptional repressor NsrR (144 aa).

One can recognise an HTH rrf2-type domain in the interval 2-129 (QLTSFTDYGL…DKHTLLSLID (128 aa)). The H-T-H motif DNA-binding region spans 28-51 (ISKVTEVYGVSRNHMVKIINKLGQ). Residues Cys-91, Cys-96, and Cys-102 each coordinate [2Fe-2S] cluster.

[2Fe-2S] cluster is required as a cofactor.

Its function is as follows. Nitric oxide-sensitive repressor of genes involved in protecting the cell against nitrosative stress. May require iron for activity. In Photobacterium profundum (strain SS9), this protein is HTH-type transcriptional repressor NsrR.